A 379-amino-acid polypeptide reads, in one-letter code: Cytochrome-c peroxidase IdrP1 (379 aa).

Positions 1–24 (MNNRKPLQLSLLVASLAVAFTASA) are cleaved as a signal peptide. Cytochrome c domains follow at residues 50–158 (EKIA…DAFK) and 204–355 (TSQK…EALS). Heme c contacts are provided by C72, C75, H76, C219, C222, and H223.

The iodate reductase (Idr) complex is composed of a molybdopterin-dependent iodate reductase (IdrA and IdrB subunits) and two associated peroxidases (IdrP1 and IdrP2). Heme c serves as cofactor.

Its subcellular location is the periplasm. The enzyme catalyses 2 Fe(II)-[cytochrome c] + H2O2 + 2 H(+) = 2 Fe(III)-[cytochrome c] + 2 H2O. Involved in iodate respiration. Probably reduces the H(2)O(2) produced by IdrA/IdrB to H(2)O, using a reduced cytochrome c as the electron donor. The sequence is that of Cytochrome-c peroxidase IdrP1 from Pseudomonas sp. (strain SCT).